Reading from the N-terminus, the 625-residue chain is tRNA uridine 5-carboxymethylaminomethyl modification enzyme MnmG (625 aa).

14–19 (GAGHAG) lines the FAD pocket. 273-287 (GPRYCPSIEDKIVRF) contacts NAD(+).

The protein belongs to the MnmG family. As to quaternary structure, homodimer. Heterotetramer of two MnmE and two MnmG subunits. FAD serves as cofactor.

It localises to the cytoplasm. Functionally, NAD-binding protein involved in the addition of a carboxymethylaminomethyl (cmnm) group at the wobble position (U34) of certain tRNAs, forming tRNA-cmnm(5)s(2)U34. The chain is tRNA uridine 5-carboxymethylaminomethyl modification enzyme MnmG from Clostridium botulinum (strain Loch Maree / Type A3).